Reading from the N-terminus, the 148-residue chain is Lysozyme C (148 aa).

The first 18 residues, 1 to 18 (MKALIILGLVLLSVMVQA), serve as a signal peptide directing secretion. The C-type lysozyme domain occupies 19–148 (KVFERCELAR…LRQYIQGCGV (130 aa)). Disulfide bonds link C24–C146, C48–C134, C83–C99, and C95–C113. Active-site residues include E53 and D71.

This sequence belongs to the glycosyl hydrolase 22 family. As to quaternary structure, monomer.

It is found in the secreted. It carries out the reaction Hydrolysis of (1-&gt;4)-beta-linkages between N-acetylmuramic acid and N-acetyl-D-glucosamine residues in a peptidoglycan and between N-acetyl-D-glucosamine residues in chitodextrins.. Its function is as follows. Lysozymes have primarily a bacteriolytic function; those in tissues and body fluids are associated with the monocyte-macrophage system and enhance the activity of immunoagents. The sequence is that of Lysozyme C (LYZ) from Hylobates lar (Lar gibbon).